The following is a 286-amino-acid chain: Bifunctional protein FolD (286 aa).

NADP(+) contacts are provided by residues 165–167 (GRS) and Ser-190.

The protein belongs to the tetrahydrofolate dehydrogenase/cyclohydrolase family. Homodimer.

It carries out the reaction (6R)-5,10-methylene-5,6,7,8-tetrahydrofolate + NADP(+) = (6R)-5,10-methenyltetrahydrofolate + NADPH. The catalysed reaction is (6R)-5,10-methenyltetrahydrofolate + H2O = (6R)-10-formyltetrahydrofolate + H(+). The protein operates within one-carbon metabolism; tetrahydrofolate interconversion. Functionally, catalyzes the oxidation of 5,10-methylenetetrahydrofolate to 5,10-methenyltetrahydrofolate and then the hydrolysis of 5,10-methenyltetrahydrofolate to 10-formyltetrahydrofolate. This Staphylococcus epidermidis (strain ATCC 35984 / DSM 28319 / BCRC 17069 / CCUG 31568 / BM 3577 / RP62A) protein is Bifunctional protein FolD.